Reading from the N-terminus, the 173-residue chain is Protein SUGARY ENHANCER 1 (173 aa).

The disordered stretch occupies residues 1-31 (MIRPAPWVGAGHRGRGGEAGACTESLGSESG).

This sequence belongs to the fantastic four family.

Involved in starch metabolism in endosperm. Acts as a modifier of SUGARY1 (SU1), an isoamylase starch-debranching enzyme involved in amylopectin biosynthesis in endosperm. The polypeptide is Protein SUGARY ENHANCER 1 (Zea mays (Maize)).